A 559-amino-acid chain; its full sequence is Phosphatase and actin regulator 3 (559 aa).

Residues 1 to 65 form a disordered region; the sequence is MAASEDGSGC…GIRTPPVRRN (65 aa). Residues 15-24 are compositionally biased toward polar residues; the sequence is GRSQSDPSVL. Residues 25 to 35 show a composition bias toward low complexity; that stretch reads TDSSATSSADA. Threonine 70 is modified (phosphothreonine). The interval 82 to 342 is disordered; the sequence is KKKNEKLKQT…VERGKEREEA (261 aa). The stretch at 93–118 is one RPEL 1 repeat; the sequence is SALEKKMAGRQGREELIKKGLLEMME. Over residues 95-113 the composition is skewed to basic and acidic residues; that stretch reads LEKKMAGRQGREELIKKGL. The segment covering 134–151 has biased composition (polar residues); sequence SVQSEPPTPKSETLTSED. Residues 229–240 show a composition bias toward pro residues; the sequence is PSPPLLPTPPPK. Residue serine 230 is modified to Phosphoserine. Residue threonine 236 is modified to Phosphothreonine. 2 stretches are compositionally biased toward polar residues: residues 248–262 and 270–281; these read NVTG…SSMK and GQLSTPTGSPHL. Residues 293–342 show a composition bias toward basic and acidic residues; sequence VIEELHRALATKHRQDSFQGRESKGSPKKRLDVRLSRTSSVERGKEREEA. The stretch at 346 to 369 forms a coiled coil; that stretch reads DGALENKRTAAKESEENKENLIIN. RPEL repeat units follow at residues 401-426, 439-464, and 477-502; these read ELLA…PRRT, MKLS…KQRN, and QRLT…IRFS. Residues 438–518 form a required for PP1CA binding and inhibition of PP1 activity region; that stretch reads EMKLSKRLSQ…KAQDYDRRAD (81 aa). The stretch at 450-486 forms a coiled coil; it reads AVEELERRNILKQRNDQTEQEERREIKQRLTRKLNQR.

Belongs to the phosphatase and actin regulator family. In terms of assembly, binds actin and PPP1CA; thus inhibiting the protein phosphatase 1 (PP1) activity. As to expression, abundantly expressed in brain. Also found in several tumors such as lung carcinomas, nervous tumors and HL-60 leukemia cells. Isoform 3 is the major form in U-937, GOTO and HL-60 leukemia cells.

Its subcellular location is the nucleus matrix. This is Phosphatase and actin regulator 3 (PHACTR3) from Homo sapiens (Human).